The primary structure comprises 194 residues: MDKFTVHTGTTLAIMNDNIDTDQLLPKQFLKRLTKKGYEDALFFEWRYKEDGSNNPDFILNDPERQDASILITGDSFGIGSSREHAVWALRDWGFKAVIAGSFGPILYMNCTKNGVLPIELPKEARETLSKLTPTEQVTIDLPKQEVICGEHSWHFDINSSWKEKFLTGEDDIDQTMRYKDQISAYEVQISPYQ.

It belongs to the LeuD family. LeuD type 1 subfamily. In terms of assembly, heterodimer of LeuC and LeuD.

It carries out the reaction (2R,3S)-3-isopropylmalate = (2S)-2-isopropylmalate. It functions in the pathway amino-acid biosynthesis; L-leucine biosynthesis; L-leucine from 3-methyl-2-oxobutanoate: step 2/4. In terms of biological role, catalyzes the isomerization between 2-isopropylmalate and 3-isopropylmalate, via the formation of 2-isopropylmaleate. The chain is 3-isopropylmalate dehydratase small subunit from Limosilactobacillus fermentum (strain NBRC 3956 / LMG 18251) (Lactobacillus fermentum).